A 242-amino-acid chain; its full sequence is Ribosomal RNA small subunit methyltransferase G (242 aa).

Residues Gly79, 130-131 (VE), and Gln149 each bind S-adenosyl-L-methionine.

It belongs to the methyltransferase superfamily. RNA methyltransferase RsmG family.

It localises to the cytoplasm. Its function is as follows. Specifically methylates the N7 position of a guanine in 16S rRNA. In Mycoplasmoides gallisepticum (strain R(low / passage 15 / clone 2)) (Mycoplasma gallisepticum), this protein is Ribosomal RNA small subunit methyltransferase G.